A 187-amino-acid chain; its full sequence is Ribosome maturation factor RimM (187 aa).

A PRC barrel domain is found at 96–169; that stretch reads EDEFFYADLE…KLVIDPTAAG (74 aa).

The protein belongs to the RimM family. As to quaternary structure, binds ribosomal protein uS19.

The protein localises to the cytoplasm. Its function is as follows. An accessory protein needed during the final step in the assembly of 30S ribosomal subunit, possibly for assembly of the head region. Essential for efficient processing of 16S rRNA. May be needed both before and after RbfA during the maturation of 16S rRNA. It has affinity for free ribosomal 30S subunits but not for 70S ribosomes. The polypeptide is Ribosome maturation factor RimM (Rhizobium meliloti (strain 1021) (Ensifer meliloti)).